The sequence spans 741 residues: Methionine--tRNA ligase (741 aa).

Residues 1 to 22 are compositionally biased toward polar residues; sequence MTMKQYTMSKMNAETQTQTRES. The tract at residues 1–25 is disordered; the sequence is MTMKQYTMSKMNAETQTQTRESFPT. Positions 36-46 match the 'HIGH' region motif; it reads PYANGDLHIGH. Positions 167, 170, 179, and 183 each coordinate Zn(2+). Residues 309-329 are disordered; sequence VRSHSSSSAKDSSEGNSPSNI. Over residues 311 to 329 the composition is skewed to low complexity; the sequence is SHSSSSAKDSSEGNSPSNI. Thr381 lines the ATP pocket. Positions 591 to 629 are disordered; it reads KLADRVTDPTDDDDSDTDTETGTDVAETTNESHSESNMT. A compositionally biased stretch (acidic residues) spans 599 to 611; it reads PTDDDDSDTDTET. Residues 616-629 are compositionally biased toward polar residues; it reads AETTNESHSESNMT. In terms of domain architecture, tRNA-binding spans 643-741; the sequence is EFEELDLRVA…EDADPGTSIQ (99 aa).

This sequence belongs to the class-I aminoacyl-tRNA synthetase family. MetG type 1 subfamily. Homodimer. It depends on Zn(2+) as a cofactor.

Its subcellular location is the cytoplasm. The enzyme catalyses tRNA(Met) + L-methionine + ATP = L-methionyl-tRNA(Met) + AMP + diphosphate. Its function is as follows. Is required not only for elongation of protein synthesis but also for the initiation of all mRNA translation through initiator tRNA(fMet) aminoacylation. The sequence is that of Methionine--tRNA ligase from Haloquadratum walsbyi (strain DSM 16790 / HBSQ001).